The following is a 522-amino-acid chain: Penicillin-sensitive carboxypeptidase A (522 aa).

The Acyl-ester intermediate role is filled by Ser94. Lys97 acts as the Proton acceptor in catalysis. The active site involves Ser351. Lys461 lines the substrate pocket.

This sequence belongs to the peptidase S13 family.

The enzyme catalyses Preferential cleavage: (Ac)2-L-Lys-D-Ala-|-D-Ala. Also transpeptidation of peptidyl-alanyl moieties that are N-acyl substituents of D-alanine.. Inhibited by penicillin G. Functionally, carboxypeptidase. This Dictyostelium discoideum (Social amoeba) protein is Penicillin-sensitive carboxypeptidase A (pscA).